The following is a 330-amino-acid chain: Ubiquinone biosynthesis protein COQ4, mitochondrial (330 aa).

The transit peptide at methionine 1–valine 31 directs the protein to the mitochondrion. Residues histidine 212, aspartate 213, histidine 216, and glutamate 228 each coordinate Zn(2+).

This sequence belongs to the COQ4 family. In terms of assembly, component of a multi-subunit COQ enzyme complex, composed of at least COQ3, COQ4, COQ5, COQ6, COQ7 and COQ9. Zn(2+) serves as cofactor.

The protein localises to the mitochondrion inner membrane. It carries out the reaction a 4-hydroxy-3-methoxy-5-(all-trans-polyprenyl)benzoate + H(+) = a 2-methoxy-6-(all-trans-polyprenyl)phenol + CO2. It functions in the pathway cofactor biosynthesis; ubiquinone biosynthesis. Functionally, lyase that catalyzes the C1-decarboxylation of 4-hydroxy-3-methoxy-5-(all-trans-polyprenyl)benzoic acid into 2-methoxy-6-(all-trans-polyprenyl)phenol during ubiquinone biosynthesis. The protein is Ubiquinone biosynthesis protein COQ4, mitochondrial of Candida glabrata (strain ATCC 2001 / BCRC 20586 / JCM 3761 / NBRC 0622 / NRRL Y-65 / CBS 138) (Yeast).